A 514-amino-acid polypeptide reads, in one-letter code: Double-stranded RNA-binding protein 6 (514 aa).

DRBM domains follow at residues 1-70 (MYKN…ALAR) and 87-155 (VYKN…SLRQ). 2 disordered regions span residues 195–268 (NNPH…SRFP) and 455–496 (EASQ…KDDH). Polar residues-rich tracts occupy residues 216 to 225 (FPQSSHSSYS), 249 to 263 (AASQTPFRPTESPNP), and 473 to 484 (SPDSLPKTQLKT).

Functionally, binds double-stranded RNA. The sequence is that of Double-stranded RNA-binding protein 6 (DRB6) from Oryza sativa subsp. japonica (Rice).